Reading from the N-terminus, the 155-residue chain is Aspartate carbamoyltransferase regulatory chain (155 aa).

Positions 113, 118, 141, and 144 each coordinate Zn(2+).

It belongs to the PyrI family. As to quaternary structure, contains catalytic and regulatory chains. It depends on Zn(2+) as a cofactor.

Involved in allosteric regulation of aspartate carbamoyltransferase. The sequence is that of Aspartate carbamoyltransferase regulatory chain from Methanococcus aeolicus (strain ATCC BAA-1280 / DSM 17508 / OCM 812 / Nankai-3).